The chain runs to 373 residues: RNA 3'-terminal phosphate cyclase-like protein (373 aa).

Belongs to the RNA 3'-terminal cyclase family. Type 2 subfamily. Part of the small subunit (SSU) processome, composed of more than 70 proteins and the RNA chaperone small nucleolar RNA (snoRNA) U3. Interacts with BMS1.

The protein resides in the nucleus. The protein localises to the nucleolus. In terms of biological role, as part of the small subunit (SSU) processome, it plays a role in 40S-ribosomal-subunit biogenesis in the early pre-rRNA processing steps at sites A0, A1 and A2 that are required for proper maturation of the 18S RNA. Activates BMS1 by promoting GDP/GTP exchange. Does not have cyclase activity. The chain is RNA 3'-terminal phosphate cyclase-like protein (Rcl1) from Mus musculus (Mouse).